The following is a 136-amino-acid chain: Pterin-4-alpha-carbinolamine dehydratase 2 (136 aa).

3 positions are modified to N6-acetyllysine; alternate: lysine 120, lysine 124, and lysine 131. 3 positions are modified to N6-succinyllysine; alternate: lysine 120, lysine 124, and lysine 131.

It belongs to the pterin-4-alpha-carbinolamine dehydratase family. As to quaternary structure, homotetramer. Interacts with DYRK1B.

It carries out the reaction (4aS,6R)-4a-hydroxy-L-erythro-5,6,7,8-tetrahydrobiopterin = (6R)-L-erythro-6,7-dihydrobiopterin + H2O. Involved in tetrahydrobiopterin biosynthesis. Seems to both prevent the formation of 7-pterins and accelerate the formation of quinonoid-BH2. In terms of biological role, regulates the dimerization of homeodomain protein HNF-1-alpha and enhances its transcriptional activity. The chain is Pterin-4-alpha-carbinolamine dehydratase 2 (Pcbd2) from Mus musculus (Mouse).